A 92-amino-acid chain; its full sequence is Large ribosomal subunit protein bL25 (92 aa).

The protein belongs to the bacterial ribosomal protein bL25 family. In terms of assembly, part of the 50S ribosomal subunit; part of the 5S rRNA/L5/L18/L25 subcomplex. Contacts the 5S rRNA. Binds to the 5S rRNA independently of L5 and L18.

In terms of biological role, this is one of the proteins that binds to the 5S RNA in the ribosome where it forms part of the central protuberance. This chain is Large ribosomal subunit protein bL25, found in Vibrio campbellii (strain ATCC BAA-1116).